The sequence spans 357 residues: Guanine nucleotide-binding protein alpha-16 subunit (357 aa).

Residue glycine 2 is the site of N-myristoyl glycine attachment. Residue cysteine 3 is the site of S-palmitoyl cysteine attachment. The region spanning 32–357 (RTIKLLLLGA…RDNLRTCGLY (326 aa)) is the G-alpha domain. The segment at 35-48 (KLLLLGAGESGKST) is G1 motif. GTP-binding positions include 40-47 (GAGESGKS), 175-181 (LRTRIKT), 200-204 (DVGGQ), 269-272 (NKKD), and alanine 329. Positions 47 and 181 each coordinate Mg(2+). A G2 motif region spans residues 173–181 (DILRTRIKT). Residues 196-205 (FLVFDVGGQR) are G3 motif. The tract at residues 265–272 (ILFLNKKD) is G4 motif. The G5 motif stretch occupies residues 327-332 (TCATDT).

This sequence belongs to the G-alpha family. G proteins are composed of 3 units; alpha, beta and gamma. The alpha chain contains the guanine nucleotide binding site.

In terms of biological role, guanine nucleotide-binding proteins (G proteins) are involved as modulators or transducers in various transmembrane signaling systems. In the 1-cell embryo, probably together with goa-1, controls nuclear rotation and spindle elongation during mitosis. During the first embryonic cell divisons, plays a role in gpr-1/2 cortical localization and in the proper orientation of EMS blastomere mitotic spindle. The chain is Guanine nucleotide-binding protein alpha-16 subunit (gpa-16) from Caenorhabditis elegans.